The sequence spans 364 residues: Ribosomal RNA large subunit methyltransferase F (364 aa).

The segment covering 1–17 (MPKPAIKTAAKPATSSA) has biased composition (low complexity). A disordered region spans residues 1 to 53 (MPKPAIKTAAKPATSSAGKRGKPITPKSVAKPQAAKPKTVSKPKVKPGEKKRL). Residues 39–53 (TVSKPKVKPGEKKRL) show a composition bias toward basic residues.

The protein belongs to the methyltransferase superfamily. METTL16/RlmF family.

It is found in the cytoplasm. It catalyses the reaction adenosine(1618) in 23S rRNA + S-adenosyl-L-methionine = N(6)-methyladenosine(1618) in 23S rRNA + S-adenosyl-L-homocysteine + H(+). Specifically methylates the adenine in position 1618 of 23S rRNA. The chain is Ribosomal RNA large subunit methyltransferase F from Shewanella sp. (strain MR-4).